The chain runs to 245 residues: Thymidylate kinase (245 aa).

Position 55-62 (G55–S62) interacts with ATP.

This sequence belongs to the thymidylate kinase family.

The catalysed reaction is dTMP + ATP = dTDP + ADP. In terms of biological role, phosphorylation of dTMP to form dTDP in both de novo and salvage pathways of dTTP synthesis. In Rhodopirellula baltica (strain DSM 10527 / NCIMB 13988 / SH1), this protein is Thymidylate kinase.